The sequence spans 988 residues: Bifunctional glutamine synthetase adenylyltransferase/adenylyl-removing enzyme (988 aa).

Positions 1–472 (MTKRETVERR…RYSALFEQET (472 aa)) are adenylyl removase. Residues 476-988 (GEAGNLVFTG…AFVAVVKNGG (513 aa)) are adenylyl transferase.

Belongs to the GlnE family. Requires Mg(2+) as cofactor.

The enzyme catalyses [glutamine synthetase]-O(4)-(5'-adenylyl)-L-tyrosine + phosphate = [glutamine synthetase]-L-tyrosine + ADP. The catalysed reaction is [glutamine synthetase]-L-tyrosine + ATP = [glutamine synthetase]-O(4)-(5'-adenylyl)-L-tyrosine + diphosphate. Involved in the regulation of glutamine synthetase GlnA, a key enzyme in the process to assimilate ammonia. When cellular nitrogen levels are high, the C-terminal adenylyl transferase (AT) inactivates GlnA by covalent transfer of an adenylyl group from ATP to specific tyrosine residue of GlnA, thus reducing its activity. Conversely, when nitrogen levels are low, the N-terminal adenylyl removase (AR) activates GlnA by removing the adenylyl group by phosphorolysis, increasing its activity. The regulatory region of GlnE binds the signal transduction protein PII (GlnB) which indicates the nitrogen status of the cell. This Agrobacterium fabrum (strain C58 / ATCC 33970) (Agrobacterium tumefaciens (strain C58)) protein is Bifunctional glutamine synthetase adenylyltransferase/adenylyl-removing enzyme.